The following is a 627-amino-acid chain: (-)-alpha-pinene synthase 2, chloroplastic (627 aa).

The transit peptide at 1–36 (MALVSIAPLASKSCLHKSLSSSAHELKTICRTIPTL) directs the protein to the chloroplast. Aspartate 378, aspartate 382, and aspartate 530 together coordinate Mg(2+). The DDXXD motif motif lies at 378–382 (DDMYD).

The protein belongs to the terpene synthase family. Tpsd subfamily. Requires Mg(2+) as cofactor. The cofactor is Mn(2+).

It localises to the plastid. The protein localises to the chloroplast. It carries out the reaction (2E)-geranyl diphosphate = (1S,5S)-beta-pinene + diphosphate. The enzyme catalyses (2E)-geranyl diphosphate = (1S,5S)-alpha-pinene + diphosphate. Its pathway is terpene metabolism; oleoresin biosynthesis. Its function is as follows. Terpene synthase (TPS) involved in the biosynthesis of monoterpene natural products included in conifer oleoresin secretions and volatile emissions; these compounds contribute to biotic and abiotic stress defense against herbivores and pathogens. Catalyzes the conversion of (2E)-geranyl diphosphate (GPP) to (1S,5S)-beta-pinene. The polypeptide is (-)-alpha-pinene synthase 2, chloroplastic (Picea glauca (White spruce)).